Consider the following 390-residue polypeptide: 1-acyl-sn-glycerol-3-phosphate acyltransferase 2 (390 aa).

The helical transmembrane segment at 2 to 22 threads the bilayer; the sequence is AMAAAVIVPLGILFFISGLVV. The HXXXXD motif signature appears at 91-96; it reads HRSDID. The next 2 helical transmembrane spans lie at 305–325 and 333–353; these read LAVV…FLHW and KGIA…QILI. The interval 358–390 is disordered; that stretch reads SERSTPAKVAPAKPKDNHQSGPSSQTEVEEKQK.

The protein belongs to the 1-acyl-sn-glycerol-3-phosphate acyltransferase family.

It localises to the endoplasmic reticulum membrane. The catalysed reaction is a 1-acyl-sn-glycero-3-phosphate + an acyl-CoA = a 1,2-diacyl-sn-glycero-3-phosphate + CoA. Its pathway is phospholipid metabolism; CDP-diacylglycerol biosynthesis; CDP-diacylglycerol from sn-glycerol 3-phosphate: step 2/3. In terms of biological role, converts lysophosphatidic acid (LPA) into phosphatidic acid by incorporating acyl moiety at the 2 position. This is 1-acyl-sn-glycerol-3-phosphate acyltransferase 2 (LPAT2) from Brassica napus (Rape).